A 572-amino-acid polypeptide reads, in one-letter code: Laccase-3 (572 aa).

The first 18 residues, 1 to 18 (MARTTFLVSVSLFVSAVL), serve as a signal peptide directing secretion. Plastocyanin-like domains follow at residues 21-145 (TVEY…LVIY) and 157-304 (IDDE…LIYE). His82, His84, His127, and His129 together coordinate Cu cation. A disulfide bridge links Cys103 with Cys561. Asn182, Asn228, Asn294, Asn367, and Asn405 each carry an N-linked (GlcNAc...) asparagine glycan. Positions 422–540 (DMPTLLKILT…EGFAMVFAEA (119 aa)) constitute a Plastocyanin-like 3 domain. Cu cation-binding residues include His470, His473, His475, His522, Cys523, His524, and His528.

This sequence belongs to the multicopper oxidase family. As to quaternary structure, homodimer. Cu cation serves as cofactor. In terms of tissue distribution, in mycelia, at a lower level than LCC4.

It localises to the secreted. The enzyme catalyses 4 hydroquinone + O2 = 4 benzosemiquinone + 2 H2O. Lignin degradation and detoxification of lignin-derived products. The polypeptide is Laccase-3 (LCC3) (Thanatephorus cucumeris (Black scurf of potato)).